Consider the following 327-residue polypeptide: Complex I intermediate-associated protein 30, mitochondrial (327 aa).

The N-terminal 24 residues, 1 to 24, are a transit peptide targeting the mitochondrion; sequence MALVHKLLRGTYILRKFSKPASAL. The segment at 42-63 is disordered; sequence PVASPGKASSQRKTEGDLQGDH. Positions 53–63 are enriched in basic and acidic residues; the sequence is RKTEGDLQGDH. Residue S318 is modified to Phosphoserine.

The protein belongs to the CIA30 family. As to quaternary structure, part of the mitochondrial complex I assembly/MCIA complex that comprises at least the core subunits TMEM126B, NDUFAF1, ECSIT and ACAD9 and complement subunits such as COA1 and TMEM186. Interacts with ECSIT. Interacts with ACAD9. At early stages of complex I assembly, it is found in intermediate subcomplexes that contain different subunits including NDUFB6, NDUFA6, NDUFA9, NDUFS3, NDUFS7, ND1, ND2 and ND3. Interacts with TMEM70 and TMEM242.

The protein localises to the mitochondrion. It localises to the mitochondrion matrix. Its function is as follows. As part of the MCIA complex, involved in the assembly of the mitochondrial complex I. In Pongo pygmaeus (Bornean orangutan), this protein is Complex I intermediate-associated protein 30, mitochondrial.